Here is a 136-residue protein sequence, read N- to C-terminus: Small ribosomal subunit protein uS8c (136 aa).

Belongs to the universal ribosomal protein uS8 family. In terms of assembly, part of the 30S ribosomal subunit.

Its subcellular location is the plastid. It is found in the chloroplast. Functionally, one of the primary rRNA binding proteins, it binds directly to 16S rRNA central domain where it helps coordinate assembly of the platform of the 30S subunit. This is Small ribosomal subunit protein uS8c (rps8) from Oryza sativa subsp. indica (Rice).